Consider the following 204-residue polypeptide: Holliday junction branch migration complex subunit RuvA (204 aa).

A domain I region spans residues 1–64 (MIGRLQGILL…EDAHLLFGFA (64 aa)). The segment at 65-143 (QKTDRTLFRE…GIKQSDFFVE (79 aa)) is domain II. A flexible linker region spans residues 144 to 155 (STHIPLSPSIES). The interval 156–204 (HSESSSDEAISALIALGYKPAEAEKMVKRVAKPELTSEQVIREALKAAL) is domain III.

It belongs to the RuvA family. In terms of assembly, homotetramer. Forms an RuvA(8)-RuvB(12)-Holliday junction (HJ) complex. HJ DNA is sandwiched between 2 RuvA tetramers; dsDNA enters through RuvA and exits via RuvB. An RuvB hexamer assembles on each DNA strand where it exits the tetramer. Each RuvB hexamer is contacted by two RuvA subunits (via domain III) on 2 adjacent RuvB subunits; this complex drives branch migration. In the full resolvosome a probable DNA-RuvA(4)-RuvB(12)-RuvC(2) complex forms which resolves the HJ.

Its subcellular location is the cytoplasm. In terms of biological role, the RuvA-RuvB-RuvC complex processes Holliday junction (HJ) DNA during genetic recombination and DNA repair, while the RuvA-RuvB complex plays an important role in the rescue of blocked DNA replication forks via replication fork reversal (RFR). RuvA specifically binds to HJ cruciform DNA, conferring on it an open structure. The RuvB hexamer acts as an ATP-dependent pump, pulling dsDNA into and through the RuvAB complex. HJ branch migration allows RuvC to scan DNA until it finds its consensus sequence, where it cleaves and resolves the cruciform DNA. The sequence is that of Holliday junction branch migration complex subunit RuvA from Haemophilus influenzae (strain 86-028NP).